Consider the following 301-residue polypeptide: Ornithine carbamoyltransferase (301 aa).

Carbamoyl phosphate is bound by residues R100 and 127-130; that span reads HPCQ. L-ornithine-binding positions include N158, D221, and 225–226; that span reads SM. Carbamoyl phosphate contacts are provided by residues 260 to 261 and R288; that span reads CL.

The protein belongs to the aspartate/ornithine carbamoyltransferase superfamily. OTCase family.

It localises to the cytoplasm. The catalysed reaction is carbamoyl phosphate + L-ornithine = L-citrulline + phosphate + H(+). The protein operates within amino-acid biosynthesis; L-arginine biosynthesis; L-arginine from L-ornithine and carbamoyl phosphate: step 1/3. Its function is as follows. Reversibly catalyzes the transfer of the carbamoyl group from carbamoyl phosphate (CP) to the N(epsilon) atom of ornithine (ORN) to produce L-citrulline. This Shewanella oneidensis (strain ATCC 700550 / JCM 31522 / CIP 106686 / LMG 19005 / NCIMB 14063 / MR-1) protein is Ornithine carbamoyltransferase.